Here is a 498-residue protein sequence, read N- to C-terminus: Flavin-dependent halogenase otaD (498 aa).

FAD is bound by residues glycine 14, glycine 17, and glutamate 47. Chloride-binding residues include serine 326 and glycine 327. Valine 328 contributes to the FAD binding site.

It belongs to the flavin-dependent halogenase family.

It catalyses the reaction ochratoxin B + FADH2 + chloride + O2 = ochratoxin A + FAD + 2 H2O. The protein operates within mycotoxin biosynthesis. Functionally, flavin-dependent halogenase; part of the gene cluster that mediates the biosynthesis of ochratoxin A (OTA), a mycotoxin composed of a chlorinated type I polyketide dihydroisocoumarin moiety linked to L-phenylalanine, and demonstrated to have nephrotoxic, immunotoxic, genotoxic, neurotoxic, and teratogenic properties. OtaD chlorinates ochratoxin B (OTB) at the C-5 position to form OTA. The pathway begins with the highly reducing polyketide synthase otaA that catalyzes the formation of the isocoumarin group during the initial stages of biosynthesis, starting from one acetate and 4 malonate units, to originate the characteristic pentaketide skeleton 7-methylmellein (7-MM) of the OTA molecule. The newly identified cyclase otaY might be involved in the polyketide cyclization reaction during the initial steps of the OTA biosynthesis. 7-MM is then oxidized into 7-carboxymellein (also called ochratoxin beta) by the cytochrome P450 monooxygenase otaC. The NRPS encoded by the otaB gene is involved in the linking of phenylalanine to the dihydroisocoumarin ring. The reaction catalyzed by NRPS results in the production of ochratoxin B (OTB), which is the non-chlorinated analog of OTA and which subsequently serves as the substrate of the halogenase otaD for chlorination activity to form the final molecular structure of OTA, containing a chlorine atom in the C-5 position of the molecule. In Aspergillus carbonarius (strain ITEM 5010), this protein is Flavin-dependent halogenase otaD.